Consider the following 963-residue polypeptide: Vacuolar membrane protease (963 aa).

Residues 1-15 (MVSSRRGFNPIAFTP) lie on the Cytoplasmic side of the membrane. Residues 16–36 (WPVTILTSLVYLALIIPIIVV) form a helical membrane-spanning segment. Topologically, residues 37–391 (HHLVPPAPKQ…FQLNTLFGLS (355 aa)) are vacuolar. 2 N-linked (GlcNAc...) asparagine glycosylation sites follow: Asn-111 and Asn-114. Zn(2+) is bound by residues His-170 and Asp-182. The active-site Proton acceptor is Glu-216. Positions 217, 242, and 315 each coordinate Zn(2+). A helical membrane pass occupies residues 392-412 (VALLVVAPLLLILTSVALFAV). At 413–441 (DKMYMFSMYTYLSESGGQVSLYGLRGMFR) the chain is on the cytoplasmic side. Residues 442–462 (FPLILGISTALTVALAFLIMK) traverse the membrane as a helical segment. Over 463 to 473 (VNPFIIYSSPY) the chain is Vacuolar. A helical membrane pass occupies residues 474 to 494 (AVWSMMLSTCMFFAWFISCVA). Residues 495–504 (DFARPSALHR) lie on the Cytoplasmic side of the membrane. The helical transmembrane segment at 505–525 (AYAFSWMFGILWVFLVIATVY) threads the bilayer. At 526–535 (QRQHGIASSY) the chain is on the vacuolar side. Residues 536–556 (FIVFYFAGVSVATWISYLELF) traverse the membrane as a helical segment. Residues 557–668 (GLSTTQDYAR…WSIYLVSSAW (112 aa)) are Cytoplasmic-facing. The interval 569 to 618 (SRLSDRTPSSDSHLLAPSADELPSSGSVAGRDFNPEDVEDEEPTESTSLL) is disordered. Positions 603-612 (PEDVEDEEPT) are enriched in acidic residues. A helical transmembrane segment spans residues 669 to 689 (ILQFLLVAPIVLILLGQLGLF). Over 690–705 (LTSATYQIGADGGSQF) the chain is Vacuolar. The chain crosses the membrane as a helical span at residues 706–726 (IIYIGIAVLSVLILLPLFPFI). The Cytoplasmic portion of the chain corresponds to 727–732 (HRFTYH). The helical transmembrane segment at 733–753 (IPTFMLFVLIGTLVYNLTAFP) threads the bilayer. Topologically, residues 754 to 963 (FSHNSRLKVA…LVEGSYSFKL (210 aa)) are vacuolar. Asn-835 is a glycosylation site (N-linked (GlcNAc...) asparagine).

It belongs to the peptidase M28 family. The cofactor is Zn(2+).

The protein localises to the vacuole membrane. In terms of biological role, may be involved in vacuolar sorting and osmoregulation. The chain is Vacuolar membrane protease from Arthroderma gypseum (strain ATCC MYA-4604 / CBS 118893) (Microsporum gypseum).